The following is a 513-amino-acid chain: Putative fucosyltransferase-like protein (513 aa).

Positions 1-34 (MGVFSNLRGPRAGATHDEFPATNGSPSSSSSPSS) are disordered. Topologically, residues 1 to 39 (MGVFSNLRGPRAGATHDEFPATNGSPSSSSSPSSSIKRK) are cytoplasmic. Positions 25–34 (SPSSSSSPSS) are enriched in low complexity. Residues 40 to 60 (LSNLLPLCVALVVIAEIGFLG) traverse the membrane as a helical; Signal-anchor for type II membrane protein segment. Over 61–513 (RLDKVALVDT…PCAKFEVVFV (453 aa)) the chain is Lumenal. Residues N348 and N493 are each glycosylated (N-linked (GlcNAc...) asparagine).

Belongs to the glycosyltransferase 10 family.

The protein localises to the golgi apparatus. It localises to the golgi stack membrane. It functions in the pathway protein modification; protein glycosylation. In terms of biological role, may be involved in cell wall biosynthesis. May act as a fucosyltransferase. The sequence is that of Putative fucosyltransferase-like protein (FUT12) from Arabidopsis thaliana (Mouse-ear cress).